We begin with the raw amino-acid sequence, 732 residues long: Elongation factor 2 (732 aa).

In terms of domain architecture, tr-type G spans 19–260; that stretch reads ERIRNIGIAA…MVVKHLPNPI (242 aa). GTP-binding positions include 28–35, 94–98, and 148–151; these read AHIDHGKT, DTPGH, and NKVD. A Diphthamide modification is found at His-597.

It belongs to the TRAFAC class translation factor GTPase superfamily. Classic translation factor GTPase family. EF-G/EF-2 subfamily.

The protein resides in the cytoplasm. Catalyzes the GTP-dependent ribosomal translocation step during translation elongation. During this step, the ribosome changes from the pre-translocational (PRE) to the post-translocational (POST) state as the newly formed A-site-bound peptidyl-tRNA and P-site-bound deacylated tRNA move to the P and E sites, respectively. Catalyzes the coordinated movement of the two tRNA molecules, the mRNA and conformational changes in the ribosome. In Pyrococcus abyssi (strain GE5 / Orsay), this protein is Elongation factor 2 (fusA).